A 127-amino-acid chain; its full sequence is Protein chibby homolog 1 (127 aa).

Residues 1-25 (MPLFGSIFSPKKTPPRKSASLSNLH) form a disordered region. Ser9 and Ser20 each carry phosphoserine. A minimal region for the interaction with PKD2 region spans residues 60–112 (VADSVISGGVDRRETQRLRKRNQQLEEENNLLRLKVDILLDMLSETTAESHLK). Residues 68–110 (GVDRRETQRLRKRNQQLEEENNLLRLKVDILLDMLSETTAESH) adopt a coiled-coil conformation. The segment at 77 to 98 (LRKRNQQLEEENNLLRLKVDIL) is leucine-zipper; mediates homodimerization.

The protein belongs to the chibby family. Homodimer. Homodimerization is essential for nuclear localization and interaction with KPNA4 but is dispensable for interaction with CTNNB1. Interacts with polycystin-2/PKD2 and GM130. Interacts with the C-terminal region of CTNNB1. Interacts (C-terminus) with TCIM (C-terminus), TCIM competes with CTNNB1 for the interaction with CBY1. Interacts with FAM92A; this interaction facilitates targeting of FAM92A to cilium basal body. Interacts with CIBAR2. Interacts with KPNA4. In terms of tissue distribution, found in heart, brain, lung, liver, muscle, kidney and testis. Levels are approximately 3-fold higher in embryonic and adult heart than in lung or liver.

It is found in the nucleus speckle. Its subcellular location is the cytoplasm. The protein localises to the cytoskeleton. The protein resides in the cilium basal body. It localises to the microtubule organizing center. It is found in the centrosome. Its subcellular location is the centriole. The protein localises to the golgi apparatus. The protein resides in the trans-Golgi network. It localises to the cell projection. It is found in the cilium. Its subcellular location is the flagellum. The protein localises to the nucleus. Its function is as follows. Inhibits the Wnt/Wingless pathway by binding to CTNNB1/beta-catenin and inhibiting beta-catenin-mediated transcriptional activation through competition with TCF/LEF transcription factors. Has also been shown to play a role in regulating the intracellular trafficking of polycystin-2/PKD2 and possibly of other intracellular proteins. Promotes adipocyte and cardiomyocyte differentiation. This is Protein chibby homolog 1 (Cby1) from Mus musculus (Mouse).